We begin with the raw amino-acid sequence, 60 residues long: Large ribosomal subunit protein bL32 (60 aa).

Positions Met-1–Glu-60 are disordered. Positions Ser-11–Leu-22 are enriched in basic and acidic residues.

This sequence belongs to the bacterial ribosomal protein bL32 family.

The protein is Large ribosomal subunit protein bL32 of Ectopseudomonas mendocina (strain ymp) (Pseudomonas mendocina).